The sequence spans 260 residues: 3-methyl-2-oxobutanoate hydroxymethyltransferase (260 aa).

Residues D44 and D83 each contribute to the Mg(2+) site. Residues 44-45 (DS), D83, and K113 contribute to the 3-methyl-2-oxobutanoate site. A Mg(2+)-binding site is contributed by E115. The Proton acceptor role is filled by E183.

The protein belongs to the PanB family. In terms of assembly, homodecamer; pentamer of dimers. Requires Mg(2+) as cofactor.

It localises to the cytoplasm. The catalysed reaction is 3-methyl-2-oxobutanoate + (6R)-5,10-methylene-5,6,7,8-tetrahydrofolate + H2O = 2-dehydropantoate + (6S)-5,6,7,8-tetrahydrofolate. Its pathway is cofactor biosynthesis; (R)-pantothenate biosynthesis; (R)-pantoate from 3-methyl-2-oxobutanoate: step 1/2. Catalyzes the reversible reaction in which hydroxymethyl group from 5,10-methylenetetrahydrofolate is transferred onto alpha-ketoisovalerate to form ketopantoate. This Gloeobacter violaceus (strain ATCC 29082 / PCC 7421) protein is 3-methyl-2-oxobutanoate hydroxymethyltransferase.